A 327-amino-acid polypeptide reads, in one-letter code: Acetaldehyde dehydrogenase 5 (327 aa).

S15–I18 provides a ligand contact to NAD(+). The Acyl-thioester intermediate role is filled by C133. Residues S164–N172 and N297 each bind NAD(+).

The protein belongs to the acetaldehyde dehydrogenase family.

It catalyses the reaction acetaldehyde + NAD(+) + CoA = acetyl-CoA + NADH + H(+). The chain is Acetaldehyde dehydrogenase 5 from Rhodococcus jostii (strain RHA1).